We begin with the raw amino-acid sequence, 336 residues long: Glucokinase (336 aa).

Residue 13-18 (ADVGGT) participates in ATP binding.

The protein belongs to the bacterial glucokinase family.

The protein resides in the cytoplasm. The enzyme catalyses D-glucose + ATP = D-glucose 6-phosphate + ADP + H(+). The sequence is that of Glucokinase from Cupriavidus metallidurans (strain ATCC 43123 / DSM 2839 / NBRC 102507 / CH34) (Ralstonia metallidurans).